The following is a 180-amino-acid chain: UPF0690 protein C1orf52 homolog (180 aa).

2 disordered regions span residues 1–66 (MAAE…SVTR) and 96–180 (KIWK…KKKK). A compositionally biased stretch (basic and acidic residues) spans 48–61 (KQAEKRLPGPDELF). Threonine 65 carries the post-translational modification Phosphothreonine. Position 130 is a phosphotyrosine (tyrosine 130). A compositionally biased stretch (acidic residues) spans 149–160 (EGEETVESDDDK). The residue at position 156 (serine 156) is a Phosphoserine. Over residues 161–180 (DERASKIRRVEPGEAAKKKK) the composition is skewed to basic and acidic residues.

Belongs to the UPF0690 family.

This chain is UPF0690 protein C1orf52 homolog, found in Mus musculus (Mouse).